A 464-amino-acid chain; its full sequence is MKVIQEKLPASQIGLEIEIPAETTKNTHEQVVKNLAKSVNIPGFRPGKVPRQILLQRLGTKAVKAAVIEELIENCLESALKQEGIESLGNPQLLSKFEDLIAAYEPGKALTFSVSLDVAPTIILGDYENLSVTAEETVYDPESVENWFKERQEQLATLVPVEDRGAQLGDVAIVDYRGKSAETGEDIPDIDGEDLRVDMEAGRFIEGMVEGIIGMKPEEVKEMTLTFPEDYPKEDVAAKAVIFTITMKELKAKELPELDDDFAQEVSDQETIAELRASLEKRFQEQAEKETKESIDDALTKELVKGATLDLPETLIEKEVTHILTQSFMQFQQMGLDVNQLFTKDNIPKMRENARPDAIESLKETLVVQELAKVAGIEVSPEAVAEKIANIMSQLSDRDIDMQRLEQVITEEMLAENTLEWLKEKATITLVPKGSLEEETSEEEETEETLAAAAVEVLAAEEEP.

Residues 169–256 (GDVAIVDYRG…MKELKAKELP (88 aa)) form the PPIase FKBP-type domain.

The protein belongs to the FKBP-type PPIase family. Tig subfamily.

The protein resides in the cytoplasm. The enzyme catalyses [protein]-peptidylproline (omega=180) = [protein]-peptidylproline (omega=0). Involved in protein export. Acts as a chaperone by maintaining the newly synthesized protein in an open conformation. Functions as a peptidyl-prolyl cis-trans isomerase. The sequence is that of Trigger factor from Microcystis aeruginosa (strain NIES-843 / IAM M-2473).